Consider the following 212-residue polypeptide: Large ribosomal subunit protein uL4 (212 aa).

Positions 45–71 are disordered; it reads RQGNASTKTRAEVRGGGRKPWRQKGTG. The segment covering 60–71 has biased composition (basic residues); sequence GGRKPWRQKGTG.

It belongs to the universal ribosomal protein uL4 family. In terms of assembly, part of the 50S ribosomal subunit.

One of the primary rRNA binding proteins, this protein initially binds near the 5'-end of the 23S rRNA. It is important during the early stages of 50S assembly. It makes multiple contacts with different domains of the 23S rRNA in the assembled 50S subunit and ribosome. Functionally, forms part of the polypeptide exit tunnel. This is Large ribosomal subunit protein uL4 from Nostoc punctiforme (strain ATCC 29133 / PCC 73102).